The following is a 322-amino-acid chain: Lymphokine-activated killer T-cell-originated protein kinase (322 aa).

At methionine 1 the chain carries N-acetylmethionine. Threonine 9 and threonine 24 each carry phosphothreonine. Serine 32 is modified (phosphoserine). The Protein kinase domain maps to serine 32–valine 322. Residue leucine 38–valine 46 coordinates ATP. A Phosphoserine modification is found at serine 59. Lysine 64 serves as a coordination point for ATP. Aspartate 167 functions as the Proton acceptor in the catalytic mechanism. A Glycyl lysine isopeptide (Lys-Gly) (interchain with G-Cter in SUMO2) cross-link involves residue lysine 169. The tract at residues threonine 320 to valine 322 is PDZ-interaction.

This sequence belongs to the protein kinase superfamily. STE Ser/Thr protein kinase family. MAP kinase kinase subfamily. As to quaternary structure, interacts with DLG1 and TP53. Post-translationally, phosphorylated; in a cell-cycle dependent manner at mitosis. As to expression, expressed in the testis and placenta. In the testis, restrictedly expressed in outer cell layer of seminiferous tubules.

The enzyme catalyses L-seryl-[protein] + ATP = O-phospho-L-seryl-[protein] + ADP + H(+). It catalyses the reaction L-threonyl-[protein] + ATP = O-phospho-L-threonyl-[protein] + ADP + H(+). The catalysed reaction is L-tyrosyl-[protein] + ATP = O-phospho-L-tyrosyl-[protein] + ADP + H(+). With respect to regulation, activated by phosphorylation. Its function is as follows. Phosphorylates MAP kinase p38. Seems to be active only in mitosis. May also play a role in the activation of lymphoid cells. When phosphorylated, forms a complex with TP53, leading to TP53 destabilization and attenuation of G2/M checkpoint during doxorubicin-induced DNA damage. This chain is Lymphokine-activated killer T-cell-originated protein kinase (PBK), found in Homo sapiens (Human).